The sequence spans 510 residues: NAD(P)H-quinone oxidoreductase subunit 2 A, chloroplastic (510 aa).

The next 12 helical transmembrane spans lie at 24–44 (LLLFHGSFIFPECILIFGLIL), 59–79 (WFYFISSTTLVMSITALLFRW), 99–119 (IFQFLILLCSTLCIPLSVEYI), 124–144 (MAITEFLLFVLTATLGGMFLC), 149–169 (LITLFVAPECFSLCSYLLSGY), 183–203 (YLLMGGASSSILVHGFSWLYG), 229–249 (ISIALISITVGIGFKLSPAPF), 295–315 (WHLLLEILAILSMILGNLIAI), 323–343 (MLAYSSIGQIGYVIIGIIVGD), 354–374 (YMLFYISMNLGTFACIVSFGL), 395–415 (ALSLALCLLSLGGLPPLAGFF), and 418–438 (LHLFWCGWQAGLYFLVSIGLL).

It belongs to the complex I subunit 2 family. As to quaternary structure, NDH is composed of at least 16 different subunits, 5 of which are encoded in the nucleus.

The protein resides in the plastid. The protein localises to the chloroplast thylakoid membrane. The enzyme catalyses a plastoquinone + NADH + (n+1) H(+)(in) = a plastoquinol + NAD(+) + n H(+)(out). It carries out the reaction a plastoquinone + NADPH + (n+1) H(+)(in) = a plastoquinol + NADP(+) + n H(+)(out). In terms of biological role, NDH shuttles electrons from NAD(P)H:plastoquinone, via FMN and iron-sulfur (Fe-S) centers, to quinones in the photosynthetic chain and possibly in a chloroplast respiratory chain. The immediate electron acceptor for the enzyme in this species is believed to be plastoquinone. Couples the redox reaction to proton translocation, and thus conserves the redox energy in a proton gradient. The sequence is that of NAD(P)H-quinone oxidoreductase subunit 2 A, chloroplastic from Dioscorea elephantipes (Elephant's foot yam).